Here is a 502-residue protein sequence, read N- to C-terminus: Glucose-6-phosphate isomerase (502 aa).

Glu-331 acts as the Proton donor in catalysis. Catalysis depends on residues His-362 and Lys-471.

This sequence belongs to the GPI family.

Its subcellular location is the cytoplasm. The enzyme catalyses alpha-D-glucose 6-phosphate = beta-D-fructose 6-phosphate. It participates in carbohydrate biosynthesis; gluconeogenesis. The protein operates within carbohydrate degradation; glycolysis; D-glyceraldehyde 3-phosphate and glycerone phosphate from D-glucose: step 2/4. Functionally, catalyzes the reversible isomerization of glucose-6-phosphate to fructose-6-phosphate. The chain is Glucose-6-phosphate isomerase from Xylella fastidiosa (strain 9a5c).